Consider the following 154-residue polypeptide: Protein ripply (154 aa).

The WRPW motif motif lies at 38 to 41 (WRPW). Disordered regions lie at residues 54-86 (IRER…FQHP) and 121-154 (EDPA…PILN). The segment at 85–119 (HPVKLHWSKPVYDYMYQYGKQLLDAFPVQATICIV) is ripply homology domain. The segment covering 121–140 (EDPAQSDDSDFESDYEDDSD) has biased composition (acidic residues).

The protein belongs to the ripply family. In terms of tissue distribution, in the late gastrula stage, expression appears in the dorsal presomitic mesoderm and in the first three pairs of nascent somites. Expressed strongly in forming somites and then expression is rapidly down-regulated except in the first somite pair where expression is maintained for a longer period. Also expressed in the presumptive notochord and in the tail bud at the 48 hour larval stage. Expression disappears by the 72 hour stage.

The protein resides in the nucleus. Functionally, may play a role in somitogenesis. This Branchiostoma belcheri (Amphioxus) protein is Protein ripply.